The primary structure comprises 132 residues: MTMTDPIADFLTRLRNANTAYHDEVKLPHSKIKANIAEILKREGYISDFRTEDAEVGKTLIVDLKYGPSRERSLAGVRRVSKPGLRVYAKSTNLPKVLGGLGVAIISTSSGLLTDRQAANQGVGGEVLAYVW.

It belongs to the universal ribosomal protein uS8 family. In terms of assembly, part of the 30S ribosomal subunit. Contacts proteins S5 and S12.

Functionally, one of the primary rRNA binding proteins, it binds directly to 16S rRNA central domain where it helps coordinate assembly of the platform of the 30S subunit. The sequence is that of Small ribosomal subunit protein uS8 from Rhodococcus erythropolis (strain PR4 / NBRC 100887).